A 315-amino-acid chain; its full sequence is Fe(3+)-citrate-binding protein YfmC (315 aa).

The N-terminal stretch at 1–18 is a signal peptide; that stretch reads MRTYSNKLIAIMSVLLLA. A lipid anchor (N-palmitoyl cysteine) is attached at cysteine 19. Cysteine 19 carries S-diacylglycerol cysteine lipidation. A compositionally biased stretch (low complexity) spans 27 to 36; the sequence is SSQNNNGSGK. Residues 27 to 52 form a disordered region; the sequence is SSQNNNGSGKSESKDSRVIHDEEGKT. Positions 37 to 51 are enriched in basic and acidic residues; sequence SESKDSRVIHDEEGK. Positions 60-315 constitute a Fe/B12 periplasmic-binding domain; that stretch reads RVVVLELSFL…KDVLKKVYNK (256 aa).

This sequence belongs to the bacterial solute-binding protein 8 family. The complex is composed of one ATP-binding protein (YfmF), two transmembrane proteins (YfmD and YfmE) and a solute-binding protein (YfmC).

It is found in the cell membrane. Its function is as follows. Part of the ABC transporter complex YfmCDEF involved in citrate-dependent Fe(3+) import. Binds citrate-dependent Fe(3+) and delivers it to the surface of YfmDE. In Bacillus subtilis (strain 168), this protein is Fe(3+)-citrate-binding protein YfmC (yfmC).